A 1585-amino-acid polypeptide reads, in one-letter code: Histone acetyltransferase lsy-12 (1585 aa).

2 disordered regions span residues 1–37 (MGKK…ARRE) and 279–491 (GPQH…DDPV). Basic and acidic residues predominate over residues 23-37 (PKDRTARPTAAARRE). The segment covering 279 to 296 (GPQHENVTVSENVLSTES) has biased composition (polar residues). Residues 302-312 (TETKRLHDSSR) are compositionally biased toward basic and acidic residues. Composition is skewed to polar residues over residues 355–364 (LLSNPHSTPV) and 411–426 (SRLS…SNDL). Residues 431-440 (SAPSSSSAAS) are compositionally biased toward low complexity. Basic residues predominate over residues 453–469 (QQRRKGNQSAARSRKIK). Acidic residues predominate over residues 477 to 491 (QEDEPMELDSDDDPV). The MYST-type HAT domain maps to 544 to 830 (EQARLPERIH…YDPECLDWVP (287 aa)). The C2HC MYST-type zinc-finger motif lies at 577–602 (LFICEFCFFYARSDEIMQNHAKKCML). The residue at position 644 (K644) is an N6-acetyllysine; by autocatalysis. 685-689 (SCIMT) lines the acetyl-CoA pocket. E720 serves as the catalytic Proton donor/acceptor. Residues S724 and K815 each coordinate acetyl-CoA. 2 stretches are compositionally biased toward basic and acidic residues: residues 844–855 (SKEEIEQDEQRR) and 947–956 (VLDKSNIREE). 4 disordered regions span residues 844–903 (SKEE…LKHE), 927–1262 (EENK…IGKS), 1286–1373 (ESTA…ASNH), and 1431–1507 (HHQF…VHPQ). Positions 977-999 (NKCNNTESEPNPSGRKTSATSSG) are enriched in polar residues. The segment covering 1011–1022 (TEEEEEDDDPTD) has biased composition (acidic residues). The span at 1029–1046 (DDEKPFETSVNKEKNEKS) shows a compositional bias: basic and acidic residues. Residues 1047 to 1060 (RRGKKVSKKRRSVA) show a composition bias toward basic residues. Basic and acidic residues-rich tracts occupy residues 1070–1081 (VRDRDEPKKAEN) and 1135–1151 (DIPK…AYDR). The span at 1164–1173 (PTPDSYHSSP) shows a compositional bias: low complexity. Positions 1185-1194 (LMQAQQNIYQ) are enriched in polar residues. Residues 1196 to 1207 (NDCHFAENDSKP) are compositionally biased toward basic and acidic residues. Polar residues-rich tracts occupy residues 1298–1317 (AGPS…NTTP) and 1324–1333 (HPNSQQQATP). Positions 1482–1493 (QHQQQQPQQPQQ) are enriched in low complexity.

Belongs to the MYST (SAS/MOZ) family.

It catalyses the reaction L-lysyl-[protein] + acetyl-CoA = N(6)-acetyl-L-lysyl-[protein] + CoA + H(+). Its function is as follows. Probable histone acetyltransferase. Required to initiate and then maintain lateralized gene expression in the ASE sensory neurons. Involved in determining cell fate in the ASE neurons. The chain is Histone acetyltransferase lsy-12 from Caenorhabditis elegans.